The following is a 441-amino-acid chain: Squalene synthase (441 aa).

2 helical membrane-spanning segments follow: residues 293–313 (SFQF…LVFG) and 420–440 (FKFN…YWYA).

The protein belongs to the phytoene/squalene synthase family. Mg(2+) is required as a cofactor.

The protein resides in the endoplasmic reticulum membrane. The catalysed reaction is 2 (2E,6E)-farnesyl diphosphate + NADPH + H(+) = squalene + 2 diphosphate + NADP(+). It carries out the reaction 2 (2E,6E)-farnesyl diphosphate + NADH + H(+) = squalene + 2 diphosphate + NAD(+). Its pathway is terpene metabolism; lanosterol biosynthesis; lanosterol from farnesyl diphosphate: step 1/3. In terms of biological role, catalyzes the condensation of 2 two farnesyl pyrophosphate moieties to form squalene. It is the first committed enzyme of the sterol biosynthesis pathway. Required for the biosynthesis of ergosterol. In Eremothecium gossypii (strain ATCC 10895 / CBS 109.51 / FGSC 9923 / NRRL Y-1056) (Yeast), this protein is Squalene synthase (ERG9).